A 199-amino-acid chain; its full sequence is NAD(P)H dehydrogenase (quinone) (199 aa).

The region spanning 4 to 190 is the Flavodoxin-like domain; that stretch reads ILVLYYSMYG…AIARFQGEHV (187 aa). FMN is bound by residues 10 to 15 and 79 to 81; these read SMYGHI and TRF. Tyr12 provides a ligand contact to NAD(+). Trp99 is a substrate binding site. Residues 114-119 and His134 each bind FMN; that span reads STGTGG.

Belongs to the WrbA family. Requires FMN as cofactor.

The enzyme catalyses a quinone + NADH + H(+) = a quinol + NAD(+). It carries out the reaction a quinone + NADPH + H(+) = a quinol + NADP(+). The chain is NAD(P)H dehydrogenase (quinone) from Yersinia pseudotuberculosis serotype O:1b (strain IP 31758).